Reading from the N-terminus, the 151-residue chain is Large ribosomal subunit protein bL9 (151 aa).

Belongs to the bacterial ribosomal protein bL9 family.

In terms of biological role, binds to the 23S rRNA. This chain is Large ribosomal subunit protein bL9, found in Desulfotalea psychrophila (strain LSv54 / DSM 12343).